A 378-amino-acid polypeptide reads, in one-letter code: MKNFNLLVVSSILLVDLFPTNCGHNVHFSRAINLNGVSFNNVDASSLGAAQVRQSASRGRGLGENPKDEEGADKPKKKEEKKVEPKKPRENKLKQPPAGDGAPEGDGAPAAPAGDGAPAAPAGDGAPAAPAGDGAPAAPAGDGAPAAPAGDGAPAAPAGDGAPAAPAGDGAPAAPAGDGAPAAPAGDGAPAGNRAGGQPAAGGNQAGGNRAGGQPAAGGNQAGGNRAGGQPAAGGNQAGGQPAAGGNQAGAQAGGNQAGAQAGGANAGNKKAGEAGGNAGAGQGQNNEAANVPNAKLVKEYLDKIRSTLGVEWSPCSVTCGKGVRMRRKVSAANKKPEELDVNDLETEVCTMDKCAGIFNVVSNSLRLVILLVLALFN.

A signal peptide spans 1–22; sequence MKNFNLLVVSSILLVDLFPTNC. The disordered stretch occupies residues 50–288; the sequence is AQVRQSASRG…AGAGQGQNNE (239 aa). Over residues 65–93 the composition is skewed to basic and acidic residues; sequence NPKDEEGADKPKKKEEKKVEPKKPRENKL. Positions 81–89 are required for the binding to heparan sulfate proteoglycans (HSPGs) on the surface of host hepatocytes; that stretch reads KKVEPKKPR. The interval 92-96 is region I; contains the proteolytic cleavage site; the sequence is KLKQP. The span at 96–203 shows a compositional bias: low complexity; sequence PPAGDGAPEG…RAGGQPAAGG (108 aa). The 1-1; truncated repeat unit spans residues 97 to 102; it reads PAGDGA. The tract at residues 97–191 is 11 X 9 AA tandem repeats of P-[AE]-G-D-G-A-P-A-[AG]; that stretch reads PAGDGAPEGD…AAPAGDGAPA (95 aa). 13 repeat units span residues 103-111, 112-120, 121-129, 130-138, 139-147, 148-156, 157-165, 166-174, 175-183, 184-191, 193-208, 209-224, and 225-240. Residues 193-268 form a 6 X 16 AA approximate tandem repeats of N-R-A-G-G-Q-P-A-A-G-G-N-Q-A-G-G region; the sequence is NRAGGQPAAG…GAQAGGANAG (76 aa). Residues 228 to 251 show a composition bias toward low complexity; sequence GGQPAAGGNQAGGQPAAGGNQAGA. Residues 241-251 form a 2-4; approximate; truncated repeat; sequence QPAAGGNQAGA. A 2-5; approximate; truncated repeat occupies 252–260; the sequence is QAGGNQAGA. Composition is skewed to gly residues over residues 252–266 and 274–283; these read QAGGNQAGAQAGGAN and EAGGNAGAGQ. A 2-6; approximate; truncated repeat occupies 261–268; it reads QAGGANAG. Residues 304–356 enclose the TSP type-1 domain; the sequence is KIRSTLGVEWSPCSVTCGKGVRMRRKVSAANKKPEELDVNDLETEVCTMDKCA. Disulfide bonds link C316/C350 and C320/C355. Residue T319 is glycosylated (O-linked (Fuc) threonine). C355 carries GPI-anchor amidated cysteine lipidation. Residues 356–378 constitute a propeptide, removed in mature form; it reads AGIFNVVSNSLRLVILLVLALFN.

Belongs to the plasmodium circumsporozoite protein family. In terms of processing, during host cell invasion, proteolytically cleaved at the cell membrane in the region I by a papain-like cysteine protease of parasite origin. Cleavage is triggered by the sporozoite contact with highly sulfated heparan sulfate proteoglycans (HSPGs) present on the host hepatocyte cell surface. Cleavage exposes the TSP type-1 (TSR) domain and is required for productive invasion of host hepatocytes but not for adhesion to the host cell membrane. Cleavage is dispensable for sporozoite development in the oocyst, motility and for traversal of host and vector cells. O-glycosylated; maybe by POFUT2.

It is found in the cell membrane. The protein localises to the cytoplasm. Its function is as follows. Essential sporozoite protein. In the mosquito vector, required for sporozoite development in the oocyst, migration through the vector hemolymph and entry into the vector salivary glands. In the vertebrate host, required for sporozoite migration through the host dermis and infection of host hepatocytes. Binds to highly sulfated heparan sulfate proteoglycans (HSPGs) on the surface of host hepatocytes. In terms of biological role, in the vertebrate host, binds to highly sulfated heparan sulfate proteoglycans (HSPGs) on the surface of host hepatocytes and is required for sporozoite invasion of the host hepatocytes. The polypeptide is Circumsporozoite protein (Plasmodium cynomolgi (strain Berok)).